A 312-amino-acid chain; its full sequence is MGGIREKKAEYFAKLREYLEEYKSLFVVGVDNVSSQQMHEVRKELRGRAVVLMGKNTMVRRAIRGFLSDLPDFEKLLPFVKGNVGFVFTNEPLTEIKNVIVSNRVAAPARAGAVAPEDIWVRAVNTGMEPGKTSFFQALGVPTKIARGTIEIVSDVKVVDAGNKVGQSEASLLNLLNISPFTFGLTVVQVYDNGQVFPSSILDITDEELVSHFVSAVSTIASISLAIGYPTLPSVGHTLINNYKDLLAVAIAASYHYPEIEDLVDRIENPEKYAAAAPAATSAASGDAAPAEEAAAEEEEESDDDMGFGLFD.

Lys14 is covalently cross-linked (Glycyl lysine isopeptide (Lys-Gly) (interchain with G-Cter in ubiquitin)). Ser68 is subject to Phosphoserine. Glycyl lysine isopeptide (Lys-Gly) (interchain with G-Cter in ubiquitin) cross-links involve residues Lys97 and Lys144. Residues 199–230 (SSILDITDEELVSHFVSAVSTIASISLAIGYP) form an interaction with P1A-P2B region. Residues 231 to 258 (TLPSVGHTLINNYKDLLAVAIAASYHYP) form an interaction with P1B-P2A region. A compositionally biased stretch (low complexity) spans 278-293 (PAATSAASGDAAPAEE). The disordered stretch occupies residues 278 to 312 (PAATSAASGDAAPAEEAAAEEEEESDDDMGFGLFD). The span at 294 to 306 (AAAEEEEESDDDM) shows a compositional bias: acidic residues. The residue at position 302 (Ser302) is a Phosphoserine; by CK2.

Belongs to the universal ribosomal protein uL10 family. Component of the large ribosomal subunit (LSU). Mature yeast ribosomes consist of a small (40S) and a large (60S) subunit. The 40S small subunit contains 1 molecule of ribosomal RNA (18S rRNA) and 33 different proteins (encoded by 57 genes). The large 60S subunit contains 3 rRNA molecules (25S, 5.8S and 5S rRNA) and 46 different proteins (encoded by 81 genes). The 5 acidic ribosomal P-proteins form the stalk structure of the 60S subunit. They are organized as a pentameric complex in which uL10/P0 interacts with 2 heterodimers, P1A-P2B and P1B-P2A. uL10 directly interacts with 28S rRNA. uL10 interacts with YFL034W.

The protein localises to the cytoplasm. In terms of biological role, component of the ribosome, a large ribonucleoprotein complex responsible for the synthesis of proteins in the cell. The small ribosomal subunit (SSU) binds messenger RNAs (mRNAs) and translates the encoded message by selecting cognate aminoacyl-transfer RNA (tRNA) molecules. The large subunit (LSU) contains the ribosomal catalytic site termed the peptidyl transferase center (PTC), which catalyzes the formation of peptide bonds, thereby polymerizing the amino acids delivered by tRNAs into a polypeptide chain. The nascent polypeptides leave the ribosome through a tunnel in the LSU and interact with protein factors that function in enzymatic processing, targeting, and the membrane insertion of nascent chains at the exit of the ribosomal tunnel. uL10 forms part of the P stalk that participates in recruiting G proteins to the ribosome. This Saccharomyces cerevisiae (strain ATCC 204508 / S288c) (Baker's yeast) protein is Large ribosomal subunit protein uL10.